A 22-amino-acid polypeptide reads, in one-letter code: Peroxidase 5 (22 aa).

It belongs to the peroxidase family. Classical plant (class III) peroxidase subfamily. It depends on heme b as a cofactor. Ca(2+) serves as cofactor.

The protein localises to the secreted. It localises to the cell wall. The enzyme catalyses 2 a phenolic donor + H2O2 = 2 a phenolic radical donor + 2 H2O. Functionally, removal of H(2)O(2), oxidation of toxic reductants, biosynthesis and degradation of lignin, suberization, auxin catabolism, response to environmental stresses such as wounding, pathogen attack and oxidative stress. These functions might be dependent on each isozyme/isoform in each plant tissue. This chain is Peroxidase 5, found in Cycas revoluta (Sago palm).